Here is a 215-residue protein sequence, read N- to C-terminus: Pyrrolidone-carboxylate peptidase (215 aa).

Active-site residues include E80, C143, and H167.

It belongs to the peptidase C15 family. Homotetramer.

It is found in the cytoplasm. The catalysed reaction is Release of an N-terminal pyroglutamyl group from a polypeptide, the second amino acid generally not being Pro.. Functionally, removes 5-oxoproline from various penultimate amino acid residues except L-proline. This chain is Pyrrolidone-carboxylate peptidase, found in Bacillus cytotoxicus (strain DSM 22905 / CIP 110041 / 391-98 / NVH 391-98).